The following is a 676-amino-acid chain: Probable potassium transport system protein Kup (676 aa).

A run of 12 helical transmembrane segments spans residues glycine 14–methionine 34, isoleucine 56–leucine 76, alanine 97–leucine 117, valine 142–isoleucine 162, alanine 173–isoleucine 193, alanine 219–serine 239, serine 252–leucine 272, leucine 296–glycine 316, isoleucine 345–phenylalanine 365, glycine 376–leucine 396, leucine 402–serine 422, and glycine 429–phenylalanine 449.

This sequence belongs to the HAK/KUP transporter (TC 2.A.72) family.

The protein localises to the cell membrane. The enzyme catalyses K(+)(in) + H(+)(in) = K(+)(out) + H(+)(out). Its function is as follows. Transport of potassium into the cell. Likely operates as a K(+):H(+) symporter. In Lactobacillus delbrueckii subsp. bulgaricus (strain ATCC BAA-365 / Lb-18), this protein is Probable potassium transport system protein Kup.